A 742-amino-acid polypeptide reads, in one-letter code: Protein-associating with the carboxyl-terminal domain of ezrin (742 aa).

A lipid anchor (N-myristoyl glycine) is attached at G2. A Protein kinase domain is found at 2–245 (GSENSALKSY…LCTLLSHDFF (244 aa)). HEAT repeat units follow at residues 199–238 (ESLL…ALCT), 285–323 (LIAS…HAQG), 333–370 (LFQS…HFTQ), and 372–409 (QLKK…LLGP). Position 439 is a phosphoserine (S439). 3 disordered regions span residues 506-544 (LSDV…QTVN), 568-598 (SSWD…TSGE), and 629-652 (GDDA…VPSE). Positions 529–539 (WPDWSEPEEPE) are enriched in acidic residues. Residues 548–742 (WPREPCDDVK…GELNWEDNNW (195 aa)) form an interaction with EZR region. Residue S707 is modified to Phosphoserine. The segment at 723–742 (EGEAEGWEEEGELNWEDNNW) is disordered.

This sequence belongs to the protein kinase superfamily. In terms of assembly, interacts with EZR/VIL2 C-terminal domain. In terms of processing, may be myristoylated; myristoylation may target it to Golgi compartment. Phosphorylated. In terms of tissue distribution, ubiquitously expressed.

The protein resides in the cytoplasm. It is found in the golgi apparatus. The protein localises to the cell projection. It localises to the lamellipodium. May play a role in regulating cell adhesion/migration complexes in migrating cells. This is Protein-associating with the carboxyl-terminal domain of ezrin (SCYL3) from Homo sapiens (Human).